The following is a 1049-amino-acid chain: Dyslexia-associated protein KIAA0319-like protein (1049 aa).

Residues 1-29 (MEKRLGVKPNPASWILSGYYWQTSAKWLR) are Cytoplasmic-facing. Residues 30–50 (TLYLFYTCFCFSVLWLSTDAS) traverse the membrane as a helical segment. The MANSC domain maps to 49–127 (ASESRCQQGK…AFRTHSSNSM (79 aa)). At 51–932 (ESRCQQGKTQ…ESNCEWSVLY (882 aa)) the chain is on the extracellular side. The tract at residues 234-277 (TTDLTAELPGGPKNVSAQPEIPEGLATTPSTQQVKSSEKTQIAV) is disordered. N-linked (GlcNAc...) asparagine glycosylation is found at Asn247, Asn395, and Asn487. 5 PKD domains span residues 310–401 (VVSA…VKPE), 409–498 (IAIV…VNKA), 504–594 (VANA…VQPE), 600–688 (QADA…VKEE), and 694–785 (IAKI…VKPD). A helical transmembrane segment spans residues 933–953 (VIIATFVIVVALGILSWTVIC). The Cytoplasmic segment spans residues 954–1049 (CCKRQKGKPK…KARSPREEIL (96 aa)). At Thr974 the chain carries Phosphothreonine. Ser978, Ser1009, and Ser1031 each carry phosphoserine. Positions 1022 to 1049 (GKLLHGQNGSVPNGQTPLKARSPREEIL) are disordered. Residues 1028–1037 (QNGSVPNGQT) are compositionally biased toward polar residues. Thr1037 carries the phosphothreonine modification.

In terms of assembly, interacts with RTN4R. In terms of processing, N-glycosylated.

The protein localises to the cytoplasmic granule membrane. It is found in the golgi apparatus membrane. Its subcellular location is the golgi apparatus. It localises to the trans-Golgi network membrane. The protein resides in the cell membrane. Possible role in axon guidance through interaction with RTN4R. The sequence is that of Dyslexia-associated protein KIAA0319-like protein from Pongo abelii (Sumatran orangutan).